A 139-amino-acid polypeptide reads, in one-letter code: Putative pre-16S rRNA nuclease (139 aa).

Belongs to the YqgF nuclease family.

Its subcellular location is the cytoplasm. Functionally, could be a nuclease involved in processing of the 5'-end of pre-16S rRNA. This is Putative pre-16S rRNA nuclease from Rippkaea orientalis (strain PCC 8801 / RF-1) (Cyanothece sp. (strain PCC 8801)).